Here is a 235-residue protein sequence, read N- to C-terminus: Futalosine hydrolase (235 aa).

This sequence belongs to the PNP/UDP phosphorylase family. Futalosine hydrolase subfamily.

It carries out the reaction futalosine + H2O = dehypoxanthine futalosine + hypoxanthine. The protein operates within quinol/quinone metabolism; menaquinone biosynthesis. Its function is as follows. Catalyzes the hydrolysis of futalosine (FL) to dehypoxanthine futalosine (DHFL) and hypoxanthine, a step in the biosynthesis of menaquinone (MK, vitamin K2). Does not accept aminodeoxyfutalosine (AFL) as a substrate. This Streptomyces coelicolor (strain ATCC BAA-471 / A3(2) / M145) protein is Futalosine hydrolase.